We begin with the raw amino-acid sequence, 313 residues long: MFENKPDDSPVYLATASHDQTIRLWQARTGRCYFSFRYPDLHVNRLELTPEKGKLVAACNPHIRLFDLRSYNPHIPVRNFVSHTKNVMAVGFQYTGHMMYSGSEDGSVKIWDLRVRECQREFRSVSPVNTVVLHPNQTELISGDQNGNIRVWDLRADLCSCELVPEVGTPIRSLTVMWDGTMVVAANDRGTCYVWRSLCERQTMTEFEPLHKLQAHNSHILKCLLSPGNNRYLATASSDKTVKIWNLDGFKLEKVLTGHERWVWDCDFSMDGEYLVTASSDTTARLWSMRAGKEEMVYQAHRKATVCCTLLRD.

WD repeat units follow at residues M1 to S35, Y38 to P76, S82 to E121, R123 to E162, E166 to T205, A215 to V255, and G258 to V297.

Belongs to the WD repeat LST8 family.

In terms of biological role, probable non-functional protein. In Arabidopsis thaliana (Mouse-ear cress), this protein is Non-functional target of rapamycin complex subunit LST8-2.